The chain runs to 607 residues: Rap1 GTPase-GDP dissociation stimulator 1 (607 aa).

ARM repeat units lie at residues 89–131 (GLIS…DQAG) and 170–211 (DSLQ…NLAE). The interval 122–170 (EGRSAVDQAGGAQIVIDHLRSLCGRTDPASEKLMTVFCGMLMNYSNEND) is prevents binding to prenylated RHOA. Lysine 230 carries the post-translational modification N6-acetyllysine. 3 ARM repeats span residues 347-390 (DGNC…NLAI), 391-431 (PVVN…MLID), and 479-519 (SKDV…LIAA).

Interacts with RABL3. Interacts with RHOT1. As to quaternary structure, interacts with unprenylated RHOA; the interaction is direct. Interacts with RAP1A. Interacts with KRAS. Interacts with RAC1. Interacts with RAP1B. Preferentially interacts with unprenylated GTPases that will become geranylgeranylated. May also interact with prenylated GTPases. In terms of assembly, interacts with prenylated RHOA; the interaction is direct and in a 1:1 stoichiometry. Interacts with RAP1A. Interacts with KRAS. Interacts with RAC1. Interacts with RAP1B. Preferentially interacts with prenylated GTPases. In terms of processing, serotonylated on Gln residues by TGM2 in response to hypoxia, leading to its inactivation.

The protein resides in the cytoplasm. It localises to the cytosol. The protein localises to the endoplasmic reticulum. Its subcellular location is the mitochondrion. It is found in the nucleus. Acts as a GEF (guanine nucleotide exchange factor) for the Rho family of small GTP-binding proteins (G proteins) that stimulates the dissociation of GDP to enable subsequent binding of GTP. Additionally, appears to chaperone the processing and/or trafficking of small GTPases containing a C-terminal polybasic region independently of GEF activity. Targets include RAP1A/RAP1B, RHOA, RHOB, RHOC, RAC1 and KRAS. Regulates mitochondrial dynamics by controlling RHOT function to promote mitochondrial fission during high calcium conditions. Able to promote the Ca(2+) release from the endoplasmic reticulum via both inositol trisphosphate (Ins3P) and ryanodine sensitive receptors leading to a enhanced mitochondrial Ca(2+) uptake. Its function is as follows. Acts as a GEF (guanine nucleotide exchange factor) for unprenylated RHOA. Chaperones the entry and passage of small GTPases through the prenylation pathway. Recognizes the last amino acid in the GTPase C-terminal CAAX motif with a preference for 'Leu' over 'Met', indicating involvement in the geranylgeranylation pathway. May also recognize prenylated GTPases. Functionally, acts as a GEF (guanine nucleotide exchange factor) for prenylated RHOA. Acts as a GEF for RHOC. Chaperones the downstream trafficking and/or processing of small newly prenylated GTPases. Escorts RAC1 to the nucleus. The polypeptide is Rap1 GTPase-GDP dissociation stimulator 1 (Mus musculus (Mouse)).